The following is a 138-amino-acid chain: Endoribonuclease YbeY (138 aa).

3 residues coordinate Zn(2+): histidine 98, histidine 102, and histidine 108.

It belongs to the endoribonuclease YbeY family. Zn(2+) is required as a cofactor.

It localises to the cytoplasm. Single strand-specific metallo-endoribonuclease involved in late-stage 70S ribosome quality control and in maturation of the 3' terminus of the 16S rRNA. The sequence is that of Endoribonuclease YbeY from Thermosipho melanesiensis (strain DSM 12029 / CIP 104789 / BI429).